We begin with the raw amino-acid sequence, 654 residues long: Endoplasmic reticulum chaperone BiP (654 aa).

Positions M1–A18 are cleaved as a signal peptide. The segment at M1–A80 is required for interaction with ELAPOR1. G36–Y39 lines the ATP pocket. A Phosphoserine modification is found at S86. K96 contributes to the ATP binding site. At K125 the chain carries N6-acetyllysine. A nucleotide-binding (NBD) region spans residues K125 to K280. A 3'-nitrotyrosine modification is found at Y160. At K213 the chain carries N6-acetyllysine. Position 227–229 (G227–T229) interacts with ATP. K271 is modified (N6-acetyllysine). E293–S300 serves as a coordination point for ATP. K326 carries the N6-acetyllysine modification. K352 is covalently cross-linked (Glycyl lysine isopeptide (Lys-Gly) (interchain with G-Cter in SUMO2)). N6-acetyllysine; alternate is present on K353. Residue K353 forms a Glycyl lysine isopeptide (Lys-Gly) (interchain with G-Cter in SUMO1); alternate linkage. G364–R367 is an ATP binding site. Positions Q409 to V419 are interdomain linker. The substrate-binding (SBD) stretch occupies residues C420 to T500. At K447 the chain carries N6-succinyllysine. At R492 the chain carries Omega-N-methylarginine. T518 is subject to O-AMP-threonine; alternate. The residue at position 518 (T518) is a Phosphothreonine; alternate. N6,N6,N6-trimethyllysine; by METTL21A; in vitro is present on K585. At K585 the chain carries N6,N6-dimethyllysine; alternate. The residue at position 585 (K585) is an N6-methyllysine; alternate. An N6-methyllysine modification is found at K591. The tract at residues K633–L654 is disordered. Phosphothreonine occurs at positions 643 and 648. Acidic residues predominate over residues G644 to L654. The short motif at K651 to L654 is the Prevents secretion from ER element.

This sequence belongs to the heat shock protein 70 family. Monomer and homooligomer; homooligomerization via the interdomain linker inactivates the chaperone activity and acts as a storage of HSPA5/BiP molecules. Interacts with DNAJC1 (via J domain). Component of an EIF2 complex at least composed of CELF1/CUGBP1, CALR, CALR3, EIF2S1, EIF2S2, HSP90B1 and HSPA5. Part of a large chaperone multiprotein complex comprising DNAJB11, HSP90B1, HSPA5, HYOU, PDIA2, PDIA4, PDIA6, PPIB, SDF2L1, UGGT1 and very small amounts of ERP29, but not, or at very low levels, CALR nor CANX. Interacts with TMEM132A and TRIM21. May form a complex with ERLEC1, OS9, SEL1L and SYVN1. Interacts with DNAJC10. Interacts with DNAJB9/ERdj4; leading to recruit HSPA5/BiP to ERN1/IRE1. Interacts with ERN1/IRE1 (via luminal domain); the interaction takes place following interaction with DNAJB9/ERdj4 and leads to inactivate ERN1/IRE1, the interaction also competitively inhibits ERN1 interaction with MANF. Interacts directly with MANF (via SAP domain); the interaction inhibits ATP binding to HSPA5/BiP and subsequent nucleotide exchange. Interacts with EIF2AK3/PERK (via luminal domain); interaction leads to inactivate EIF2AK3/PERK. Interacts with MX1. Interacts with METTL23. Interacts with CEMIP; the interaction induces calcium leakage from the endoplasmic reticulum and cell migration. Interacts with PCSK4 form; the interaction takes place in the endoplasmic reticulum. Interacts with CIPC. Interacts with CCDC88B (via C-terminus); the interaction opposes ERN1-mediated JNK activation, protecting against apoptosis. Interacts with INPP5K; necessary for INPP5K localization at the endoplasmic reticulum. Interacts with MANF; the interaction is direct. Interacts with LOXL2; leading to activate the ERN1/IRE1-XBP1 pathway of the unfolded protein response. Interacts with CLU under stressed condition; interaction increases CLU protein stability; facilitates its retrotranslocation and redistribution to the mitochondria; cooperatively suppress stress-induced apoptosis by stabilizing mitochondrial membrane integrity. Interacts with CCDC47. Interacts with CLN3. Interacts with ELAPOR1; may regulate the function of HSPA5 in apoptosis and cell proliferation. Interacts with CASP7. Interacts with ILDR2; the interaction stabilizes ILDR2 expression. Interacts with ADAM7. Post-translationally, in unstressed cells, AMPylation at Thr-518 by FICD inactivates the chaperome activity: AMPylated form is locked in a relatively inert state and only weakly stimulated by J domain-containing proteins. In response to endoplasmic reticulum stress, de-AMPylation by the same protein, FICD, restores the chaperone activity.

It is found in the endoplasmic reticulum lumen. It localises to the melanosome. The protein localises to the cytoplasm. Its subcellular location is the cell surface. It catalyses the reaction ATP + H2O = ADP + phosphate + H(+). With respect to regulation, the chaperone activity is regulated by ATP-induced allosteric coupling of the nucleotide-binding (NBD) and substrate-binding (SBD) domains. In the ADP-bound and nucleotide-free (apo) states, the two domains have little interaction. In contrast, in the ATP-bound state the two domains are tightly coupled, which results in drastically accelerated kinetics in both binding and release of polypeptide substrates. J domain-containing co-chaperones (DNAJB9/ERdj4 or DNAJC10/ERdj5) stimulate the ATPase activity and are required for efficient substrate recognition by HSPA5/BiP. Homooligomerization inactivates participating HSPA5/BiP protomers and probably act as reservoirs to store HSPA5/BiP molecules when they are not needed by the cell. Its function is as follows. Endoplasmic reticulum chaperone that plays a key role in protein folding and quality control in the endoplasmic reticulum lumen. Involved in the correct folding of proteins and degradation of misfolded proteins via its interaction with DNAJC10/ERdj5, probably to facilitate the release of DNAJC10/ERdj5 from its substrate. Acts as a key repressor of the EIF2AK3/PERK and ERN1/IRE1-mediated unfolded protein response (UPR). In the unstressed endoplasmic reticulum, recruited by DNAJB9/ERdj4 to the luminal region of ERN1/IRE1, leading to disrupt the dimerization of ERN1/IRE1, thereby inactivating ERN1/IRE1. Also binds and inactivates EIF2AK3/PERK in unstressed cells. Accumulation of misfolded protein in the endoplasmic reticulum causes release of HSPA5/BiP from ERN1/IRE1 and EIF2AK3/PERK, allowing their homodimerization and subsequent activation. Plays an auxiliary role in post-translational transport of small presecretory proteins across endoplasmic reticulum (ER). May function as an allosteric modulator for SEC61 channel-forming translocon complex, likely cooperating with SEC62 to enable the productive insertion of these precursors into SEC61 channel. Appears to specifically regulate translocation of precursors having inhibitory residues in their mature region that weaken channel gating. May also play a role in apoptosis and cell proliferation. The chain is Endoplasmic reticulum chaperone BiP from Pongo abelii (Sumatran orangutan).